The chain runs to 1438 residues: DNA polymerase III PolC-type (1438 aa).

The Exonuclease domain occupies 422–578; it reads YVVFDVETTG…YDTEATAYIF (157 aa).

Belongs to the DNA polymerase type-C family. PolC subfamily.

Its subcellular location is the cytoplasm. The enzyme catalyses DNA(n) + a 2'-deoxyribonucleoside 5'-triphosphate = DNA(n+1) + diphosphate. Required for replicative DNA synthesis. This DNA polymerase also exhibits 3' to 5' exonuclease activity. The chain is DNA polymerase III PolC-type from Staphylococcus aureus (strain MSSA476).